Reading from the N-terminus, the 662-residue chain is UvrABC system protein B (662 aa).

The 158-residue stretch at 31–188 (DNIEGGEKAQ…NDLVDIQFER (158 aa)) folds into the Helicase ATP-binding domain. 44–51 (GATGTGKT) serves as a coordination point for ATP. The short motif at 97 to 120 (YYDYYQPEAYVPSSDTYIEKDSSV) is the Beta-hairpin element. The Helicase C-terminal domain maps to 435 to 601 (QIDDLLGEIN…TIKKEIRDLI (167 aa)). The UVR domain maps to 626–661 (KELVKKLEKQMQEAVEVLDFELAAQIRDMMLEVKAL).

Belongs to the UvrB family. In terms of assembly, forms a heterotetramer with UvrA during the search for lesions. Interacts with UvrC in an incision complex.

The protein localises to the cytoplasm. Its function is as follows. The UvrABC repair system catalyzes the recognition and processing of DNA lesions. A damage recognition complex composed of 2 UvrA and 2 UvrB subunits scans DNA for abnormalities. Upon binding of the UvrA(2)B(2) complex to a putative damaged site, the DNA wraps around one UvrB monomer. DNA wrap is dependent on ATP binding by UvrB and probably causes local melting of the DNA helix, facilitating insertion of UvrB beta-hairpin between the DNA strands. Then UvrB probes one DNA strand for the presence of a lesion. If a lesion is found the UvrA subunits dissociate and the UvrB-DNA preincision complex is formed. This complex is subsequently bound by UvrC and the second UvrB is released. If no lesion is found, the DNA wraps around the other UvrB subunit that will check the other stand for damage. The sequence is that of UvrABC system protein B from Streptococcus pneumoniae (strain ATCC 700669 / Spain 23F-1).